Here is an 898-residue protein sequence, read N- to C-terminus: Translation initiation factor IF-2 (898 aa).

Disordered stretches follow at residues 51–70 and 114–303; these read RKSHGAEDEGSGKKITLKRK and LAAE…KQHG. 2 stretches are compositionally biased toward basic and acidic residues: residues 114–171 and 184–258; these read LAAE…EKSK and PAKE…DDKG. The tr-type G domain occupies 398–567; sequence HRAPVVTIMG…LLQSELLELQ (170 aa). The tract at residues 407-414 is G1; sequence GHVDHGKT. A GTP-binding site is contributed by 407–414; that stretch reads GHVDHGKT. Positions 432–436 are G2; the sequence is GITQH. The segment at 453–456 is G3; it reads DTPG. GTP is bound by residues 453–457 and 507–510; these read DTPGH and NKID. A G4 region spans residues 507–510; that stretch reads NKID. Residues 543-545 form a G5 region; that stretch reads SAH.

Belongs to the TRAFAC class translation factor GTPase superfamily. Classic translation factor GTPase family. IF-2 subfamily.

Its subcellular location is the cytoplasm. One of the essential components for the initiation of protein synthesis. Protects formylmethionyl-tRNA from spontaneous hydrolysis and promotes its binding to the 30S ribosomal subunits. Also involved in the hydrolysis of GTP during the formation of the 70S ribosomal complex. The polypeptide is Translation initiation factor IF-2 (Alcanivorax borkumensis (strain ATCC 700651 / DSM 11573 / NCIMB 13689 / SK2)).